The sequence spans 295 residues: Fatty acyl-CoA reductase (295 aa).

21–28 contacts NADP(+); the sequence is TGASSGIG. Serine 153 contributes to the substrate binding site. Catalysis depends on tyrosine 166, which acts as the Proton acceptor.

Belongs to the short-chain dehydrogenases/reductases (SDR) family.

It carries out the reaction hexadecanal + NADP(+) + CoA = hexadecanoyl-CoA + NADPH + H(+). In terms of biological role, catalyzes the NADPH-dependent reduction of long chain acyl-CoA (with chain lengths of 14 to 22 carbons) to the corresponding aldehyde. The sequence is that of Fatty acyl-CoA reductase (acr1) from Acinetobacter baylyi (strain ATCC 33305 / BD413 / ADP1).